The following is a 303-amino-acid chain: Probable 5-dehydro-4-deoxyglucarate dehydratase (303 aa).

It belongs to the DapA family.

It catalyses the reaction 5-dehydro-4-deoxy-D-glucarate + H(+) = 2,5-dioxopentanoate + CO2 + H2O. Its pathway is carbohydrate acid metabolism; D-glucarate degradation; 2,5-dioxopentanoate from D-glucarate: step 2/2. This Polaromonas naphthalenivorans (strain CJ2) protein is Probable 5-dehydro-4-deoxyglucarate dehydratase.